The chain runs to 222 residues: Adenylate kinase (222 aa).

Residue S2 is a propeptide, removed in mature form. 2 positions are modified to N-acetylserine: S2 and S3. 16–21 (GAGKGT) provides a ligand contact to ATP. Residues 36–65 (ATGDMLRSQIAKGTQLGLEAKKIMDQGGLV) form an NMP region. AMP contacts are provided by residues T37, R42, 63–65 (GLV), 92–95 (GFPR), and Q99. Residues 133 to 170 (GRLIHPASGRSYHKIFNPPKEDMKDDVTGEALVQRSDD) are LID. ATP-binding positions include R134 and 143–144 (SY). AMP-binding residues include R167 and R178. Q206 serves as a coordination point for ATP.

Belongs to the adenylate kinase family. AK2 subfamily. Monomer.

It localises to the cytoplasm. Its subcellular location is the cytosol. It is found in the mitochondrion intermembrane space. It catalyses the reaction AMP + ATP = 2 ADP. In terms of biological role, catalyzes the reversible transfer of the terminal phosphate group between ATP and AMP. Plays an important role in cellular energy homeostasis and in adenine nucleotide metabolism. Adenylate kinase activity is critical for regulation of the phosphate utilization and the AMP de novo biosynthesis pathways. The sequence is that of Adenylate kinase from Saccharomyces cerevisiae (strain RM11-1a) (Baker's yeast).